Consider the following 998-residue polypeptide: Probable protein kinase DDB_G0277539 (998 aa).

Disordered regions lie at residues 1–34 (MDFP…DFDQ), 65–207 (CEDQ…TNEF), 265–284 (INNN…FSSS), 316–367 (SNGS…NYSS), 380–420 (ERTN…PNSI), and 435–489 (RLQS…NNNN). A compositionally biased stretch (acidic residues) spans 23 to 32 (YDDDDDDDDF). The segment covering 70–139 (QQQQQQSSSP…NNNNNNNNNN (70 aa)) has biased composition (low complexity). Positions 140–150 (SHHHHLRKGRR) are enriched in basic residues. Residues 166–177 (ASLSSTKTNMFP) show a composition bias toward polar residues. Low complexity-rich tracts occupy residues 184–203 (SSPS…QSQQ) and 265–274 (INNNYNNNNN). The segment covering 316-328 (SNGSYNKGNTFPS) has biased composition (polar residues). Basic and acidic residues predominate over residues 330–340 (EVKRVRPDQRA). 2 stretches are compositionally biased toward low complexity: residues 393 to 415 (NVNN…NNNN) and 450 to 489 (NNNN…NNNN). The region spanning 508–849 (FQELDLIGEG…AEQLLEHPLI (342 aa)) is the Protein kinase domain. Residues 514 to 522 (IGEGSFGHV) and lysine 537 each bind ATP. Aspartate 631 (proton acceptor) is an active-site residue. Residues asparagine 636 and glutamate 677 each contribute to the Mg(2+) site.

This sequence belongs to the protein kinase superfamily. Ser/Thr protein kinase family. WEE1 subfamily.

It carries out the reaction L-seryl-[protein] + ATP = O-phospho-L-seryl-[protein] + ADP + H(+). It catalyses the reaction L-threonyl-[protein] + ATP = O-phospho-L-threonyl-[protein] + ADP + H(+). In Dictyostelium discoideum (Social amoeba), this protein is Probable protein kinase DDB_G0277539.